Here is a 129-residue protein sequence, read N- to C-terminus: MTEDLFGDLQDDTILAHLDNPAEDTSRFPALLAELNDLLRGELSRLGVDPAHSLEIVVAICKHLGGGQVYIPRGQALDSLIRDLRIWNDFNGRNVSELTTRYGVTFNTVYKAIRRMRRLKYRQYQPSLL.

The segment at 28-64 is dimerization; that stretch reads FPALLAELNDLLRGELSRLGVDPAHSLEIVVAICKHL. The interval 77-129 is DNA-binding; the sequence is LDSLIRDLRIWNDFNGRNVSELTTRYGVTFNTVYKAIRRMRRLKYRQYQPSLL. The H-T-H motif DNA-binding region spans 94 to 114; that stretch reads NVSELTTRYGVTFNTVYKAIR.

This sequence belongs to the c/mor transcriptional regulatory family. As to quaternary structure, homodimer.

It is found in the host cytoplasm. In terms of biological role, activator of the Pm promoter, which controls middle genes expression. Activation of Pm allows expression of protein C necessary for late gene expression. In addition to Mor binding, activation of Pm might require the interaction of Mor with the C-terminus of host RNAP subunits RpoA and RpoH. This Escherichia phage Mu (Bacteriophage Mu) protein is Middle operon regulator (mor).